Consider the following 357-residue polypeptide: Iron deficiency-induced protein A (357 aa).

A signal peptide (tat-type signal) is located at residues 1–36 (MSESMFSRRDFLLGGTALAGTLLLDSFGDWRRRAEA). Fe cation-binding residues include histidine 48, tyrosine 49, tyrosine 182, tyrosine 238, and tyrosine 239.

It belongs to the bacterial solute-binding protein 1 family. Post-translationally, predicted to be exported by the Tat system. The position of the signal peptide cleavage has not been experimentally proven.

The protein localises to the cellular thylakoid membrane. In terms of biological role, plays an important role in protecting the acceptor side of photosystem II (PSII) against oxidative damage, especially under iron-limiting growth conditions. May also be part of a periplasmic ABC transporter complex involved in iron import. The chain is Iron deficiency-induced protein A (idiA) from Synechococcus elongatus (strain ATCC 33912 / PCC 7942 / FACHB-805) (Anacystis nidulans R2).